We begin with the raw amino-acid sequence, 372 residues long: MGWSCLVTGAGGLLGQRIVRLLVEEKELKEIRALDKAFRPELREEFSKLQNRTKLTVLEGDILDEPFLKRACQDVSVVIHTACIIDVFGVTHRESIMNVNVKGTQLLLEACVQASVPVFIYTSSIEVAGPNSYKEIIQNGHEEEPLENTWPTPYPYSKKLAEKAVLAANGWNLKNGDTLYTCALRPTYIYGEGGPFLSASINEALNNNGILSSVGKFSTVNPVYVGNVAWAHILALRALRDPKKAPSVRGQFYYISDDTPHQSYDNLNYILSKEFGLRLDSRWSLPLTLMYWIGFLLEVVSFLLSPIYSYQPPFNRHTVTLSNSVFTFSYKKAQRDLAYKPLYSWEEAKQKTVEWVGSLVDRHKETLKSKTQ.

The Proton acceptor role is filled by Y154. K158 is an NAD(+) binding site. A helical transmembrane segment spans residues 287–307 (LTLMYWIGFLLEVVSFLLSPI).

The protein belongs to the 3-beta-HSD family. In terms of tissue distribution, expressed in adrenal gland, testis and ovary.

It localises to the endoplasmic reticulum membrane. Its subcellular location is the mitochondrion membrane. It catalyses the reaction a 3beta-hydroxy-Delta(5)-steroid + NAD(+) = a 3-oxo-Delta(5)-steroid + NADH + H(+). The catalysed reaction is a 3-oxo-Delta(5)-steroid = a 3-oxo-Delta(4)-steroid. The enzyme catalyses pregnenolone + NAD(+) = pregn-5-ene-3,20-dione + NADH + H(+). It carries out the reaction pregn-5-ene-3,20-dione = progesterone. It catalyses the reaction 3beta-hydroxyandrost-5-en-17-one + NAD(+) = androst-5-ene-3,17-dione + NADH + H(+). The catalysed reaction is androst-5-ene-3,17-dione = androst-4-ene-3,17-dione. Its pathway is lipid metabolism; steroid biosynthesis. Functionally, 3-beta-HSD is a bifunctional enzyme, that catalyzes the oxidative conversion of Delta(5)-ene-3-beta-hydroxy steroid, and the oxidative conversion of ketosteroids. The 3-beta-HSD enzymatic system plays a crucial role in the biosynthesis of all classes of hormonal steroids. This Homo sapiens (Human) protein is 3 beta-hydroxysteroid dehydrogenase/Delta 5--&gt;4-isomerase type 2.